The chain runs to 1068 residues: Protein AF-10 (1068 aa).

Residues 22 to 74 (IGGCCVCSDERGWAENPLVYCDGHGCSVAVHQACYGIVQVPTGPWFCRKCESQ) form a PHD-type 1 zinc finger. The segment at 79–112 (RVRCELCPHKDGALKRTDNGGWAHVVCALYIPEV) adopts a C2HC pre-PHD-type zinc-finger fold. Residues 80–287 (VRCELCPHKD…SLKRLEDTTA (208 aa)) form a self-association region. Positions 106–190 (ALYIPEVQFA…EGNGADNVQY (85 aa)) are required for interaction with histone H3. A PHD-type 2 zinc finger spans residues 135–198 (KTCYICDEQG…QYCGYCKYHF (64 aa)). Residues 141–233 (DEQGRESKAA…QDKHHEKEKK (93 aa)) form an interaction with FSTL3 region. Positions 206–260 (RGSNRSYDQSLSDSSSHSQDKHHEKEKKKYKEKDKHKQKHKKQPEPSPALVPSLT) are disordered. The span at 211 to 222 (SYDQSLSDSSSH) shows a compositional bias: low complexity. Serine 217 is modified (phosphoserine). The span at 223–240 (SQDKHHEKEKKKYKEKDK) shows a compositional bias: basic and acidic residues. Residue serine 252 is modified to Phosphoserine. Lysine 280 is covalently cross-linked (Glycyl lysine isopeptide (Lys-Gly) (interchain with G-Cter in SUMO2)). Residues 291–305 (NANFQEVSAHTSSGK) show a composition bias toward polar residues. The segment at 291-505 (NANFQEVSAH…SSASPTSSVA (215 aa)) is disordered. Residues 306–317 (DVSETRGSEGKG) show a composition bias toward basic and acidic residues. The tract at residues 311–674 (RGSEGKGKKS…QDLGDNSRNL (364 aa)) is DNA-binding. The segment covering 352 to 372 (SFSGTPGSVKSSSGSSVQSPQ) has biased composition (low complexity). Composition is skewed to polar residues over residues 387–396 (YSHSQQSSAT) and 404–446 (SGSQ…SSLP). A Phosphoserine modification is found at serine 436. The span at 465 to 483 (EKKRKGNKQSKHGPGRPKG) shows a compositional bias: basic residues. The segment covering 490–505 (VSHLSVSSASPTSSVA) has biased composition (low complexity). Serine 532 carries the phosphoserine modification. The span at 583 to 594 (SGSGSSTPVSSS) shows a compositional bias: low complexity. 2 disordered regions span residues 583–612 (SGSG…ALSP) and 660–708 (NNQT…SLEN). 2 stretches are compositionally biased toward polar residues: residues 595–604 (HLPQQSSGHL) and 660–673 (NNQT…NSRN). Residues 674–694 (LVGRGSSPRGSLSPRSPVSSL) show a composition bias toward low complexity. Residues serine 684, serine 686, and serine 689 each carry the phosphoserine modification. Positions 703 to 784 (NSSLENLPPV…NAQLSVPFPT (82 aa)) are transactivation domain; required for DOT1L-binding. The segment at 750–778 (LQVENRRLEEQIKNLTAKKERLQLLNAQL) is leucine-zipper. Residues 800–814 (AQTAPTTDSLNSSKS) are compositionally biased toward polar residues. Residues 800–865 (AQTAPTTDSL…SPAQQGSGVS (66 aa)) are disordered. Composition is skewed to low complexity over residues 834–848 (LTSS…SALS) and 855–865 (QSPAQQGSGVS).

Self-associates. Interacts with FSTL3 isoform 2; the interaction enhances MLLT10 in vitro transcriptional activity and self-association. Interacts with YEATS4. Interacts with SS18. Interacts with DOT1L; this interaction also occurs with the KMT2A/MLL1 fusion protein. Interacts with histone H3; interaction is necessary for MLLT10 binding to nucleosomes; interaction is inhibited by histone H3 'Lys-27' methylations (H3K27me1, H3K27me2 and H3K27me3) amd acetylation; interaction stabilizes association of MLLT10 at chromatin; interaction is essential for histone H3 'Lys-79' dimethylation (H3K79me2). In terms of tissue distribution, expressed abundantly in testis.

It localises to the nucleus. Its function is as follows. Probably involved in transcriptional regulation. In vitro or as fusion protein with KMT2A/MLL1 has transactivation activity. Binds to cruciform DNA. In cells, binding to unmodified histone H3 regulates DOT1L functions including histone H3 'Lys-79' dimethylation (H3K79me2) and gene activation. This is Protein AF-10 from Homo sapiens (Human).